Reading from the N-terminus, the 164-residue chain is 6,7-dimethyl-8-ribityllumazine synthase (164 aa).

5-amino-6-(D-ribitylamino)uracil is bound by residues Phe-24, 62 to 64 (SFE), and 86 to 88 (AVI). 91 to 92 (QT) contributes to the (2S)-2-hydroxy-3-oxobutyl phosphate binding site. His-94 (proton donor) is an active-site residue. Phe-119 lines the 5-amino-6-(D-ribitylamino)uracil pocket. Position 133 (Arg-133) interacts with (2S)-2-hydroxy-3-oxobutyl phosphate.

The protein belongs to the DMRL synthase family.

The enzyme catalyses (2S)-2-hydroxy-3-oxobutyl phosphate + 5-amino-6-(D-ribitylamino)uracil = 6,7-dimethyl-8-(1-D-ribityl)lumazine + phosphate + 2 H2O + H(+). It participates in cofactor biosynthesis; riboflavin biosynthesis; riboflavin from 2-hydroxy-3-oxobutyl phosphate and 5-amino-6-(D-ribitylamino)uracil: step 1/2. Functionally, catalyzes the formation of 6,7-dimethyl-8-ribityllumazine by condensation of 5-amino-6-(D-ribitylamino)uracil with 3,4-dihydroxy-2-butanone 4-phosphate. This is the penultimate step in the biosynthesis of riboflavin. In Synechocystis sp. (strain ATCC 27184 / PCC 6803 / Kazusa), this protein is 6,7-dimethyl-8-ribityllumazine synthase.